The sequence spans 268 residues: Pantothenate synthetase (268 aa).

18 to 25 (MGYLHEGH) is an ATP binding site. His-25 acts as the Proton donor in catalysis. Residue Gln-49 coordinates (R)-pantoate. Gln-49 provides a ligand contact to beta-alanine. Residue 135 to 138 (GQKD) coordinates ATP. Residue Gln-141 participates in (R)-pantoate binding. ATP is bound by residues Ile-164 and 172–175 (LSSR).

It belongs to the pantothenate synthetase family. In terms of assembly, homodimer.

The protein localises to the cytoplasm. It carries out the reaction (R)-pantoate + beta-alanine + ATP = (R)-pantothenate + AMP + diphosphate + H(+). It participates in cofactor biosynthesis; (R)-pantothenate biosynthesis; (R)-pantothenate from (R)-pantoate and beta-alanine: step 1/1. In terms of biological role, catalyzes the condensation of pantoate with beta-alanine in an ATP-dependent reaction via a pantoyl-adenylate intermediate. This Dehalococcoides mccartyi (strain CBDB1) protein is Pantothenate synthetase.